A 258-amino-acid polypeptide reads, in one-letter code: Undecaprenyl-diphosphatase (258 aa).

Transmembrane regions (helical) follow at residues 1–21, 42–62, 71–91, 96–116, 134–154, 173–193, 211–231, and 237–257; these read MSIIDAVILGIVEGLTEFLPV, LKCFEVVIQLGSILAVVFTFF, LWIKLIIGFLPTAAIGYLLYS, LFSQNVVVYMLIIWGVIFIVV, GISYKQAFFIGLSQCFAMVPG, QTAAAFSFLLAVPTMFAATFY, LFLLGGFVAFLVALFAIKMFL, and FDYIPFGIYRILIAFAFMFFV.

This sequence belongs to the UppP family.

The protein resides in the cell inner membrane. It carries out the reaction di-trans,octa-cis-undecaprenyl diphosphate + H2O = di-trans,octa-cis-undecaprenyl phosphate + phosphate + H(+). In terms of biological role, catalyzes the dephosphorylation of undecaprenyl diphosphate (UPP). Confers resistance to bacitracin. The protein is Undecaprenyl-diphosphatase of Campylobacter hominis (strain ATCC BAA-381 / DSM 21671 / CCUG 45161 / LMG 19568 / NCTC 13146 / CH001A).